We begin with the raw amino-acid sequence, 660 residues long: tRNA 5-methylaminomethyl-2-thiouridine biosynthesis bifunctional protein MnmC (660 aa).

Residues 1-242 (MTDRIVPATL…KRAMLVGEFA (242 aa)) form a tRNA (mnm(5)s(2)U34)-methyltransferase region. Residues 266–660 (IGAGLAGCAV…VRALRHGRVA (395 aa)) form an FAD-dependent cmnm(5)s(2)U34 oxidoreductase region.

This sequence in the N-terminal section; belongs to the methyltransferase superfamily. tRNA (mnm(5)s(2)U34)-methyltransferase family. It in the C-terminal section; belongs to the DAO family. The cofactor is FAD.

Its subcellular location is the cytoplasm. The enzyme catalyses 5-aminomethyl-2-thiouridine(34) in tRNA + S-adenosyl-L-methionine = 5-methylaminomethyl-2-thiouridine(34) in tRNA + S-adenosyl-L-homocysteine + H(+). Functionally, catalyzes the last two steps in the biosynthesis of 5-methylaminomethyl-2-thiouridine (mnm(5)s(2)U) at the wobble position (U34) in tRNA. Catalyzes the FAD-dependent demodification of cmnm(5)s(2)U34 to nm(5)s(2)U34, followed by the transfer of a methyl group from S-adenosyl-L-methionine to nm(5)s(2)U34, to form mnm(5)s(2)U34. This is tRNA 5-methylaminomethyl-2-thiouridine biosynthesis bifunctional protein MnmC from Burkholderia pseudomallei (strain K96243).